Consider the following 79-residue polypeptide: Toxin ICK-20 (79 aa).

Positions 1–20 are cleaved as a signal peptide; that stretch reads MMKYFLVLCLVVLGVAAVQA. Cystine bridges form between cysteine 43–cysteine 57, cysteine 50–cysteine 61, cysteine 56–cysteine 78, and cysteine 68–cysteine 74. N-linked (GlcNAc...) asparagine glycosylation is present at asparagine 71.

It belongs to the neurotoxin 13 (insecticidal toxin ABC) family. ICK-21 subfamily. As to expression, expressed by the venom gland.

The protein localises to the secreted. Functionally, ion channel inhibitor. In Trittame loki (Brush-footed trapdoor spider), this protein is Toxin ICK-20.